A 181-amino-acid polypeptide reads, in one-letter code: Histone deacetylase complex subunit SAP30L-B (181 aa).

Disulfide bonds link C26–C27 and C35–C71. The segment at 26 to 74 adopts an Atypical zinc-finger fold; it reads CCLIDGGERCPRPAGNASFSKRVQKSISQKKLKLDIDKSVRHLYICDFH. A disordered region spans residues 82 to 103; sequence RNKRKRKTSDDGGDSPEHETDV. Positions 83–88 match the Nuclear localization signal (NLS) motif; the sequence is NKRKRK. Positions 85–87 are important for DNA and phosphoinositide binding; it reads RKR.

Belongs to the SAP30 family. In terms of assembly, interacts with components of the histone deacetylase complex sin3a, hdac1 and hdac2. Binds histones and nucleosomes.

The protein localises to the nucleus. It localises to the nucleolus. Functionally, functions as a transcription repressor, probably via its interaction with histone deacetylase complexes. Involved in the functional recruitment of the class 1 Sin3-histone deacetylase complex (HDAC) to the nucleolus. Binds DNA, apparently without sequence-specificity, and bends bound double-stranded DNA. Binds phosphoinositol phosphates (phosphoinositol 3-phosphate, phosphoinositol 4-phosphate and phosphoinositol 5-phosphate) via the same basic sequence motif that mediates DNA binding and nuclear import. The polypeptide is Histone deacetylase complex subunit SAP30L-B (sap30l-b) (Xenopus laevis (African clawed frog)).